The primary structure comprises 116 residues: Protein cop (116 aa).

In terms of biological role, putative control of replication message. This Staphylococcus aureus protein is Protein cop (cop).